A 195-amino-acid chain; its full sequence is U8 snoRNA-decapping enzyme (195 aa).

Residues 18–168 (GWRHACHAML…LENTFIGNAR (151 aa)) form the Nudix hydrolase domain. Positions 24, 50, and 57 each coordinate substrate. Mn(2+) is bound by residues G59, E76, E80, and H99. The Nudix box motif lies at 61-82 (FVDLRDGSLEDGLNRELGEELG). Substrate contacts are provided by N166 and Q170. E173 is a Mn(2+) binding site.

It belongs to the Nudix hydrolase family. NUDT16 subfamily. As to quaternary structure, homodimer. Mg(2+) is required as a cofactor. Mn(2+) serves as cofactor. The cofactor is Co(2+).

Its subcellular location is the nucleus. It is found in the nucleolus. It localises to the nucleoplasm. The protein localises to the cytoplasm. The catalysed reaction is a 5'-end (N(7)-methyl 5'-triphosphoguanosine)-ribonucleoside in mRNA + H2O = N(7)-methyl-GDP + a 5'-end phospho-ribonucleoside in mRNA + 2 H(+). It catalyses the reaction IDP + H2O = IMP + phosphate + H(+). The enzyme catalyses dIDP + H2O = dIMP + phosphate + H(+). It carries out the reaction a 5'-end NAD(+)-phospho-ribonucleoside in mRNA + H2O = a 5'-end phospho-ribonucleoside in mRNA + NAD(+) + H(+). The catalysed reaction is a 5'-end FAD-phospho-ribonucleoside in mRNA + H2O = a 5'-end phospho-adenosine-phospho-ribonucleoside in mRNA + FMN + 2 H(+). It catalyses the reaction a 5'-end CoA-ribonucleoside in mRNA + H2O = a 5'-end phospho-adenosine-phospho-ribonucleoside in mRNA + (R)-4'-phosphopantetheine + 2 H(+). Functionally, RNA-binding and decapping enzyme that catalyzes the cleavage of the cap structure of snoRNAs and mRNAs in a metal-dependent manner. Part of the U8 snoRNP complex that is required for the accumulation of mature 5.8S and 28S rRNA. Has diphosphatase activity and removes m7G and/or m227G caps from U8 snoRNA and leaves a 5'monophosphate on the RNA. Also catalyzes the cleavage of the cap structure on mRNAs. Does not hydrolyze cap analog structures like 7-methylguanosine nucleoside triphosphate (m7GpppG). Also hydrolysis m7G- and m227G U3-capped RNAs but with less efficiencies. Has broad substrate specificity with manganese or cobalt as cofactor and can act on various RNA species. Binds to the U8 snoRNA; metal is not required for RNA-binding. May play a role in the regulation of snoRNAs and mRNAs degradation. Also acts as a phosphatase; hydrolyzes the non-canonical purine nucleotides inosine diphosphate (IDP) and deoxyinosine diphosphate (dITP) as well as guanosine diphosphate (GDP), deoxyguanosine diphosphate (dGDP), xanthine diphosphate (XDP), inosine triphosphate (ITP) and deoxyinosine triphosphate (ITP) to their respective monophosphate derivatives and does not distinguish between the deoxy- and ribose forms. The order of activity with different substrates is IDP &gt; dIDP &gt;&gt; GDP = dGDP &gt; XDP = ITP = dITP. Binds strongly to GTP, ITP and XTP. Participates in the hydrolysis of dIDP/IDP and probably excludes non-canonical purines from RNA and DNA precursor pools, thus preventing their incorporation into RNA and DNA and avoiding chromosomal lesions. Exhibits decapping activity towards NAD-capped RNAs and FAD-capped RNAs. Exhibits decapping activity towards dpCoA-capped RNAs in vitro. This Ovis aries (Sheep) protein is U8 snoRNA-decapping enzyme (NUDT16).